A 91-amino-acid chain; its full sequence is Teretoxin Tan6.2 (91 aa).

Positions methionine 1–leucine 21 are cleaved as a signal peptide. Positions glycine 22–lysine 50 are excised as a propeptide.

Belongs to the teretoxin M (TM) superfamily. In terms of processing, contains 3 disulfide bonds. As to expression, expressed by the venom duct.

It localises to the secreted. The sequence is that of Teretoxin Tan6.2 from Terebra anilis (Auger snail).